Here is a 263-residue protein sequence, read N- to C-terminus: 4-hydroxy-tetrahydrodipicolinate reductase (263 aa).

Residues 7–12, 96–98, and 122–125 contribute to the NAD(+) site; these read GFKGRM, GTT, and APNF. His152 serves as the catalytic Proton donor/acceptor. Residue His153 participates in (S)-2,3,4,5-tetrahydrodipicolinate binding. Lys156 serves as the catalytic Proton donor. 162 to 163 lines the (S)-2,3,4,5-tetrahydrodipicolinate pocket; sequence GT.

This sequence belongs to the DapB family.

It is found in the cytoplasm. It carries out the reaction (S)-2,3,4,5-tetrahydrodipicolinate + NAD(+) + H2O = (2S,4S)-4-hydroxy-2,3,4,5-tetrahydrodipicolinate + NADH + H(+). It catalyses the reaction (S)-2,3,4,5-tetrahydrodipicolinate + NADP(+) + H2O = (2S,4S)-4-hydroxy-2,3,4,5-tetrahydrodipicolinate + NADPH + H(+). It participates in amino-acid biosynthesis; L-lysine biosynthesis via DAP pathway; (S)-tetrahydrodipicolinate from L-aspartate: step 4/4. Catalyzes the conversion of 4-hydroxy-tetrahydrodipicolinate (HTPA) to tetrahydrodipicolinate. In Listeria monocytogenes serotype 4b (strain CLIP80459), this protein is 4-hydroxy-tetrahydrodipicolinate reductase.